Consider the following 271-residue polypeptide: Glutamate racemase (271 aa).

Substrate-binding positions include 12-13 and 44-45; these read DS and YG. The active-site Proton donor/acceptor is C75. 76-77 is a binding site for substrate; it reads NT. The active-site Proton donor/acceptor is the C185. Position 186–187 (186–187) interacts with substrate; sequence TH.

The protein belongs to the aspartate/glutamate racemases family.

It catalyses the reaction L-glutamate = D-glutamate. Its pathway is cell wall biogenesis; peptidoglycan biosynthesis. Provides the (R)-glutamate required for cell wall biosynthesis. This Mycobacterium marinum (strain ATCC BAA-535 / M) protein is Glutamate racemase.